A 1128-amino-acid chain; its full sequence is Membrane-associated guanylate kinase, WW and PDZ domain-containing protein 3 (1128 aa).

Residues 22-108 (WGGPAGPDPE…PVRLKTVRPG (87 aa)) enclose the PDZ 1 domain. One can recognise a Guanylate kinase-like domain in the interval 116–290 (RHYLSLQFQK…SMDFRNYMSR (175 aa)). 123–130 (FQKGSIDH) contacts ATP. Positions 184–276 (TYDGNFYGTP…DWMKPVPSYN (93 aa)) are disordered. Pro residues predominate over residues 193 to 204 (PKPPAEPSPFQP). Positions 238-247 (LPEDEEEEEK) are enriched in acidic residues. Over residues 257 to 267 (ENKEKHSDSSD) the composition is skewed to basic and acidic residues. 2 WW domains span residues 295–328 (EPLP…DPRL) and 341–374 (GELP…NPVL). 2 consecutive PDZ domains span residues 412–494 (RTSL…TLCR) and 581–657 (TIPL…LILR). A disordered region spans residues 658–688 (GGPPSPTKTGKMKDKQESSGSLEALSDAIPQ). PDZ domains follow at residues 728-810 (DVFL…TVRR) and 852-939 (DVCL…VAEE). Disordered regions lie at residues 939–985 (EEHR…GKEV) and 999–1018 (LAQP…SQAQ). Polar residues-rich tracts occupy residues 946–956 (SGTNSAKQSPA) and 965–974 (AQSSASSTDR). In terms of domain architecture, PDZ 6 spans 1024–1106 (PVELERGPRG…KVLLLLRPGT (83 aa)).

This sequence belongs to the MAGUK family.

The protein localises to the cell membrane. It is found in the cell junction. The protein resides in the tight junction. In terms of biological role, acts as a scaffolding protein at cell-cell junctions, thereby regulating various cellular and signaling processes. In Gallus gallus (Chicken), this protein is Membrane-associated guanylate kinase, WW and PDZ domain-containing protein 3 (MAGI3).